Here is a 264-residue protein sequence, read N- to C-terminus: Type II iodothyronine deiodinase (264 aa).

Residues 1–7 (MGLLSVD) lie on the Lumenal side of the membrane. Residues 8–28 (LLITLQILPGFFSNCLFLALY) form a helical; Signal-anchor for type III membrane protein membrane-spanning segment. Residues 29–264 (DSVVLVKHVL…AESGQTGTEK (236 aa)) are Cytoplasmic-facing. The active site involves selenocysteine 124. Selenocysteine 124 is a non-standard amino acid (selenocysteine).

This sequence belongs to the iodothyronine deiodinase family. Predominantly monomer. Can form homodimers but homodimerization is not essential for enzyme activity. As to expression, high levels seen in the metamorphosing tail.

It is found in the endoplasmic reticulum membrane. The catalysed reaction is 3,3',5-triiodo-L-thyronine + iodide + A + H(+) = L-thyroxine + AH2. It catalyses the reaction 3,3'-diiodo-L-thyronine + iodide + A + H(+) = 3,3',5'-triiodo-L-thyronine + AH2. The enzyme catalyses 3'-iodo-L-thyronine + iodide + A + H(+) = 3',5'-diiodo-L-thyronine + AH2. It carries out the reaction 3,3'-diiodothyronamine + iodide + A + H(+) = 3,3',5'-triiodothyronamine + AH2. The catalysed reaction is 3'-iodothyronamine + iodide + A + H(+) = 3',5'-diiodothyronamine + AH2. Not inhibited by N(6)-propylthiouracil. Its function is as follows. Plays a crucial role in the metabolism of thyroid hormones (TH) and has specific roles in TH activation and inactivation by deiodination. Catalyzes the deiodination of L-thyroxine (T4) to 3,5,3'-triiodothyronine (T3) and 3',5'-diiodothyronine (3',5'-T2) to 3'-monoiodothyronine (3'-T1) via outer-ring deiodination (ORD). Catalyzes the deiodination of 3,3',5'-triiodothyronine (rT3) to 3,3'-diiodothyronine (3,3'-T2) via ORD. Catalyzes the phenolic ring deiodinations of 3,3',5'-triiodothyronamine and 3',5'- diiodothyronamine. The protein is Type II iodothyronine deiodinase (dio2) of Aquarana catesbeiana (American bullfrog).